The following is a 603-amino-acid chain: UPF0313 protein MJ1155 (603 aa).

Residues glycine 285–arginine 557 form the Radical SAM core domain. [4Fe-4S] cluster contacts are provided by cysteine 299, cysteine 303, and cysteine 306.

Belongs to the UPF0313 family. [4Fe-4S] cluster is required as a cofactor.

This is UPF0313 protein MJ1155 from Methanocaldococcus jannaschii (strain ATCC 43067 / DSM 2661 / JAL-1 / JCM 10045 / NBRC 100440) (Methanococcus jannaschii).